The following is a 64-amino-acid chain: Large ribosomal subunit protein bL33m (64 aa).

The protein belongs to the bacterial ribosomal protein bL33 family. Component of the mitochondrial ribosome large subunit (39S) which comprises a 16S rRNA and about 50 distinct proteins.

The protein localises to the mitochondrion. The chain is Large ribosomal subunit protein bL33m (mRpL33) from Drosophila melanogaster (Fruit fly).